The sequence spans 330 residues: Glycerol-3-phosphate dehydrogenase [NAD(P)+] (330 aa).

NADPH contacts are provided by S10, W11, R31, and K105. Sn-glycerol 3-phosphate is bound by residues K105, G135, and S137. A139 lines the NADPH pocket. Sn-glycerol 3-phosphate-binding residues include K190, D243, S253, R254, and N255. The Proton acceptor role is filled by K190. R254 lines the NADPH pocket. Residues V278 and E280 each contribute to the NADPH site.

This sequence belongs to the NAD-dependent glycerol-3-phosphate dehydrogenase family.

The protein resides in the cytoplasm. The catalysed reaction is sn-glycerol 3-phosphate + NAD(+) = dihydroxyacetone phosphate + NADH + H(+). The enzyme catalyses sn-glycerol 3-phosphate + NADP(+) = dihydroxyacetone phosphate + NADPH + H(+). It participates in membrane lipid metabolism; glycerophospholipid metabolism. In terms of biological role, catalyzes the reduction of the glycolytic intermediate dihydroxyacetone phosphate (DHAP) to sn-glycerol 3-phosphate (G3P), the key precursor for phospholipid synthesis. The protein is Glycerol-3-phosphate dehydrogenase [NAD(P)+] of Oleidesulfovibrio alaskensis (strain ATCC BAA-1058 / DSM 17464 / G20) (Desulfovibrio alaskensis).